A 64-amino-acid polypeptide reads, in one-letter code: Large ribosomal subunit protein bL35 (64 aa).

This sequence belongs to the bacterial ribosomal protein bL35 family.

This is Large ribosomal subunit protein bL35 from Alcanivorax borkumensis (strain ATCC 700651 / DSM 11573 / NCIMB 13689 / SK2).